Consider the following 144-residue polypeptide: Large ribosomal subunit protein uL16 (144 aa).

Belongs to the universal ribosomal protein uL16 family. As to quaternary structure, part of the 50S ribosomal subunit.

Binds 23S rRNA and is also seen to make contacts with the A and possibly P site tRNAs. In Oceanobacillus iheyensis (strain DSM 14371 / CIP 107618 / JCM 11309 / KCTC 3954 / HTE831), this protein is Large ribosomal subunit protein uL16.